We begin with the raw amino-acid sequence, 166 residues long: Protein-export protein SecB (166 aa).

It belongs to the SecB family. Homotetramer, a dimer of dimers. One homotetramer interacts with 1 SecA dimer.

It is found in the cytoplasm. Its function is as follows. One of the proteins required for the normal export of preproteins out of the cell cytoplasm. It is a molecular chaperone that binds to a subset of precursor proteins, maintaining them in a translocation-competent state. It also specifically binds to its receptor SecA. The chain is Protein-export protein SecB from Acidiphilium cryptum (strain JF-5).